A 590-amino-acid chain; its full sequence is Fucose-1-phosphate guanylyltransferase (590 aa).

In terms of tissue distribution, expressed at highest levels in brain, moderately in testis, ovary and kidney, and weakly in liver, spleen, heart and lung.

The protein resides in the cytoplasm. It catalyses the reaction beta-L-fucose 1-phosphate + GTP + H(+) = GDP-beta-L-fucose + diphosphate. Its function is as follows. Catalyzes the formation of GDP-L-fucose from GTP and L-fucose-1-phosphate. Functions as a salvage pathway to reutilize L-fucose arising from the turnover of glycoproteins and glycolipids. The sequence is that of Fucose-1-phosphate guanylyltransferase from Mus musculus (Mouse).